Consider the following 462-residue polypeptide: Putative amidase AmiB2 (462 aa).

Active-site charge relay system residues include lysine 81 and serine 155. Catalysis depends on serine 179, which acts as the Acyl-ester intermediate.

It belongs to the amidase family.

The catalysed reaction is a monocarboxylic acid amide + H2O = a monocarboxylate + NH4(+). The sequence is that of Putative amidase AmiB2 (amiB2) from Mycobacterium bovis (strain ATCC BAA-935 / AF2122/97).